Here is a 189-residue protein sequence, read N- to C-terminus: MTDPKDTINIENVVASTGIGQELDLQSVAMDLEGADYDPEQFPGLVYRTQEPKSAALIFRSGKIVCTGAKSTDDVHESLEIVFDKLRELQIPVDDDPEITVQNIVTSADLGENLNLNAIAIGLGLENIEYEPEQFPGLVYRLDEPSVVALLFGSGKLVITGGKQPTDAEAAVDVIISRLSELGLLNGSF.

2 tandem repeats follow at residues 10–86 (IENV…FDKL) and 101–179 (VQNI…ISRL).

This sequence belongs to the TBP family.

In terms of biological role, general factor that plays a role in the activation of archaeal genes transcribed by RNA polymerase. Binds specifically to the TATA box promoter element which lies close to the position of transcription initiation. The polypeptide is TATA-box-binding protein 1 (tbp1) (Haloferax volcanii (strain ATCC 29605 / DSM 3757 / JCM 8879 / NBRC 14742 / NCIMB 2012 / VKM B-1768 / DS2) (Halobacterium volcanii)).